Consider the following 488-residue polypeptide: (S)-canadine synthase CYP719A21 (488 aa).

A helical membrane pass occupies residues 6–26 (LWILTLISTILAVFAAVLIIF). Cysteine 432 is a binding site for heme.

It belongs to the cytochrome P450 family. The cofactor is heme.

Its subcellular location is the membrane. The enzyme catalyses (S)-tetrahydrocolumbamine + reduced [NADPH--hemoprotein reductase] + O2 = (S)-canadine + oxidized [NADPH--hemoprotein reductase] + 2 H2O + H(+). The protein operates within alkaloid biosynthesis. Cytochrome P450 involved in the biosynthesis of the benzylisoquinoline alkaloid noscapine. Converts (S)-tetrahydrocolumbamine to (S)-canadine. The chain is (S)-canadine synthase CYP719A21 from Papaver somniferum (Opium poppy).